Consider the following 390-residue polypeptide: Sulfate adenylyltransferase (390 aa).

It belongs to the sulfate adenylyltransferase family.

The catalysed reaction is sulfate + ATP + H(+) = adenosine 5'-phosphosulfate + diphosphate. It participates in sulfur metabolism; hydrogen sulfide biosynthesis; sulfite from sulfate: step 1/3. The chain is Sulfate adenylyltransferase (sat) from Synechocystis sp. (strain ATCC 27184 / PCC 6803 / Kazusa).